Here is a 95-residue protein sequence, read N- to C-terminus: CRISPR-associated endoribonuclease Cas2 3 (95 aa).

Position 7 (D7) interacts with Mg(2+).

Belongs to the CRISPR-associated endoribonuclease Cas2 protein family. As to quaternary structure, homodimer, forms a heterotetramer with a Cas1 homodimer. It depends on Mg(2+) as a cofactor.

In terms of biological role, CRISPR (clustered regularly interspaced short palindromic repeat), is an adaptive immune system that provides protection against mobile genetic elements (viruses, transposable elements and conjugative plasmids). CRISPR clusters contain sequences complementary to antecedent mobile elements and target invading nucleic acids. CRISPR clusters are transcribed and processed into CRISPR RNA (crRNA). Functions as a ssRNA-specific endoribonuclease. Involved in the integration of spacer DNA into the CRISPR cassette. The polypeptide is CRISPR-associated endoribonuclease Cas2 3 (Rhodospirillum rubrum (strain ATCC 11170 / ATH 1.1.1 / DSM 467 / LMG 4362 / NCIMB 8255 / S1)).